The following is a 486-amino-acid chain: Glutamate--tRNA ligase (486 aa).

The 'HIGH' region signature appears at 11–21; sequence PSPTGLLHIGN. The short motif at 255 to 259 is the 'KMSKS' region element; sequence KLSKR. Position 258 (Lys-258) interacts with ATP.

Belongs to the class-I aminoacyl-tRNA synthetase family. Glutamate--tRNA ligase type 1 subfamily. As to quaternary structure, monomer.

It localises to the cytoplasm. It carries out the reaction tRNA(Glu) + L-glutamate + ATP = L-glutamyl-tRNA(Glu) + AMP + diphosphate. In terms of biological role, catalyzes the attachment of glutamate to tRNA(Glu) in a two-step reaction: glutamate is first activated by ATP to form Glu-AMP and then transferred to the acceptor end of tRNA(Glu). The protein is Glutamate--tRNA ligase of Streptococcus pneumoniae serotype 19F (strain G54).